Consider the following 181-residue polypeptide: Crossover junction endodeoxyribonuclease RuvC (181 aa).

Residues aspartate 7, glutamate 67, and aspartate 139 contribute to the active site. 3 residues coordinate Mg(2+): aspartate 7, glutamate 67, and aspartate 139.

It belongs to the RuvC family. Homodimer which binds Holliday junction (HJ) DNA. The HJ becomes 2-fold symmetrical on binding to RuvC with unstacked arms; it has a different conformation from HJ DNA in complex with RuvA. In the full resolvosome a probable DNA-RuvA(4)-RuvB(12)-RuvC(2) complex forms which resolves the HJ. The cofactor is Mg(2+).

The protein resides in the cytoplasm. It carries out the reaction Endonucleolytic cleavage at a junction such as a reciprocal single-stranded crossover between two homologous DNA duplexes (Holliday junction).. Its function is as follows. The RuvA-RuvB-RuvC complex processes Holliday junction (HJ) DNA during genetic recombination and DNA repair. Endonuclease that resolves HJ intermediates. Cleaves cruciform DNA by making single-stranded nicks across the HJ at symmetrical positions within the homologous arms, yielding a 5'-phosphate and a 3'-hydroxyl group; requires a central core of homology in the junction. The consensus cleavage sequence is 5'-(A/T)TT(C/G)-3'. Cleavage occurs on the 3'-side of the TT dinucleotide at the point of strand exchange. HJ branch migration catalyzed by RuvA-RuvB allows RuvC to scan DNA until it finds its consensus sequence, where it cleaves and resolves the cruciform DNA. The polypeptide is Crossover junction endodeoxyribonuclease RuvC (Cupriavidus pinatubonensis (strain JMP 134 / LMG 1197) (Cupriavidus necator (strain JMP 134))).